A 369-amino-acid chain; its full sequence is Phospho-N-acetylmuramoyl-pentapeptide-transferase (369 aa).

Helical transmembrane passes span 2–22, 55–75, 82–102, 120–140, 163–183, 196–216, 240–260, 267–287, 292–312, and 349–369; these read IPLLMGAGISLALVMIGTQLF, AVVIGTVILAYLLTHLISWWI, PSVSGWLLLLLMAGMGLVGFL, AKLILQAAIGILFAVLAINFA, LAFAGAGLGVLLFVIWANLII, LDGLAAGASVMVFGAYTLIGI, PLDLALLAAIIFGALIGFLWW, IFMGDTGSLAIGGAIAGFAIL, ILLAIIGGLFVLITLSVILQV, and ILGGLLVAIGLGAFYAEWVVF.

This sequence belongs to the glycosyltransferase 4 family. MraY subfamily. Mg(2+) serves as cofactor.

The protein resides in the cell membrane. It carries out the reaction UDP-N-acetyl-alpha-D-muramoyl-L-alanyl-gamma-D-glutamyl-meso-2,6-diaminopimeloyl-D-alanyl-D-alanine + di-trans,octa-cis-undecaprenyl phosphate = di-trans,octa-cis-undecaprenyl diphospho-N-acetyl-alpha-D-muramoyl-L-alanyl-D-glutamyl-meso-2,6-diaminopimeloyl-D-alanyl-D-alanine + UMP. Its pathway is cell wall biogenesis; peptidoglycan biosynthesis. In terms of biological role, catalyzes the initial step of the lipid cycle reactions in the biosynthesis of the cell wall peptidoglycan: transfers peptidoglycan precursor phospho-MurNAc-pentapeptide from UDP-MurNAc-pentapeptide onto the lipid carrier undecaprenyl phosphate, yielding undecaprenyl-pyrophosphoryl-MurNAc-pentapeptide, known as lipid I. This Renibacterium salmoninarum (strain ATCC 33209 / DSM 20767 / JCM 11484 / NBRC 15589 / NCIMB 2235) protein is Phospho-N-acetylmuramoyl-pentapeptide-transferase.